A 1703-amino-acid chain; its full sequence is Stress response protein NST1 (1703 aa).

Disordered stretches follow at residues 1-91, 243-288, 347-484, 566-724, 759-807, 843-1292, 1353-1407, 1424-1465, 1516-1537, 1558-1581, 1595-1637, and 1672-1703; these read MAKS…AKDA, DQPL…PLPP, HALR…IWST, VSSG…GLGS, MHRE…EQRM, LREL…LGAP, FSPM…IGPI, HTGA…DIID, SSFSGNNPTAPGPLSPAFNGGG, ASTPGAGSSGSGMAGGAASDPWAR, EQPG…HHQL, and GAPGSNALHPGAIGSALSPTLPGARHVSGSHE. The span at 7–36 shows a compositional bias: low complexity; the sequence is PRSTPAARAAAVPPPRLAAAAQQQHHQQQP. Pro residues predominate over residues 37–48; it reads PSTPPAPVPPTK. Over residues 57–66 the composition is skewed to polar residues; sequence PPRSASPVSN. Positions 77-86 are enriched in basic residues; that stretch reads AKKKKKKSKS. Residues 253 to 273 are compositionally biased toward polar residues; that stretch reads NTANNAHPTNVNGAYGQYSSS. The span at 274-288 shows a compositional bias: pro residues; the sequence is PNPPPTQPPVEPLPP. Residues 365 to 376 are compositionally biased toward basic residues; the sequence is SKNKKKKKKKKG. Positions 384 to 393 are enriched in basic and acidic residues; sequence HGDDEAHEIE. A compositionally biased stretch (pro residues) spans 396 to 409; sequence VPPPKPVPNHPPPS. Composition is skewed to low complexity over residues 410 to 419 and 453 to 464; these read TNVSSVARNS and SSNSGKRSVSSS. Residues 572-581 are compositionally biased toward pro residues; it reads IPPPPGPGPF. Positions 614–650 are enriched in basic residues; sequence THTHTHAHTHTHTHTHTHTHTHAHQHPHPHPHGRKAS. Positions 657–690 are enriched in acidic residues; the sequence is DGYDDDELDDDAEYDDDDDDADYDDEDEDDDVEL. A compositionally biased stretch (basic and acidic residues) spans 691–703; it reads EKERAREDYDKRN. Residues 748 to 1031 are a coiled coil; that stretch reads LEMMEQLAER…AKQAAAAASR (284 aa). The span at 771 to 802 shows a compositional bias: acidic residues; sequence ASDDEDDVDGPDDVDDEDLDEEDEDEEDEILT. Basic and acidic residues-rich tracts occupy residues 853–866, 874–896, and 904–1023; these read EKAREARRMKESQK, QREAKEAERLKKDQERAAAEAEV, and RDAE…REAK. Composition is skewed to low complexity over residues 1024–1037 and 1111–1135; these read QAAAAASRGASAAQ and AGGLAAAVAASSVAPAGSSSNAVGS. Residues 1138-1148 show a composition bias toward pro residues; sequence PAPPQGLPPRP. The segment covering 1158 to 1167 has biased composition (low complexity); it reads SSSQTSSVSV. A compositionally biased stretch (polar residues) spans 1200–1219; that stretch reads LNAQSNVPMPSAKTPGSSIS. Positions 1269–1291 are enriched in low complexity; the sequence is QNSGMFGSNGSMSSSLQSPSLGA. The segment covering 1431–1444 has biased composition (low complexity); the sequence is GRSSSTTSGSGATS. The span at 1598 to 1619 shows a compositional bias: gly residues; sequence GGNGVGAGSNGGTPSGLGGIGG.

Belongs to the NST1 family.

It is found in the cytoplasm. Functionally, may act as a negative regulator of salt tolerance. In Mycosarcoma maydis (Corn smut fungus), this protein is Stress response protein NST1 (NST1).